A 407-amino-acid chain; its full sequence is Peptidase T (407 aa).

Position 81 (histidine 81) interacts with Zn(2+). The active site involves aspartate 83. Position 142 (aspartate 142) interacts with Zn(2+). Residue glutamate 176 is the Proton acceptor of the active site. Positions 177, 199, and 381 each coordinate Zn(2+).

The protein belongs to the peptidase M20B family. Zn(2+) serves as cofactor.

It localises to the cytoplasm. It carries out the reaction Release of the N-terminal residue from a tripeptide.. Functionally, cleaves the N-terminal amino acid of tripeptides. The sequence is that of Peptidase T from Streptococcus pneumoniae (strain ATCC 700669 / Spain 23F-1).